A 910-amino-acid chain; its full sequence is Lysine-specific demethylase 7 homolog (910 aa).

Polar residues predominate over residues 1–11 (MDGNDINIQKN). 3 disordered regions span residues 1-58 (MDGN…HQTP), 103-162 (NKMG…GSEP), and 183-212 (QEELKLEVDSDSEEDDVPEQKTPKESDRCG). A compositionally biased stretch (basic and acidic residues) spans 25-35 (QHSDHKNHESA). Residues 43-58 (YTASQPALSSTEHQTP) show a composition bias toward polar residues. The segment covering 118 to 130 (PKSEPKIEPHVTD) has biased composition (basic and acidic residues). The span at 150–160 (ESNQNYVSNGS) shows a compositional bias: polar residues. Over residues 200–210 (PEQKTPKESDR) the composition is skewed to basic and acidic residues. Residues 208–290 (SDRCGGCGKF…KFFCPKCVPH (83 aa)) form a PHD-type zinc finger. Residues 441–612 (SDNNEMKEIA…MQMRVYHLEN (172 aa)) form the JmjC domain. Residues 505–510 (TDFHVD), Tyr518, Lys525, and His580 each bind substrate. The Fe cation site is built by His508 and Asp510. Fe cation is bound at residue His580. 2 disordered regions span residues 712 to 790 (KIQN…PSEV) and 864 to 910 (EAVH…KLKM). Residues 748 to 757 (YKKKYTKKAK) show a composition bias toward basic residues. Basic and acidic residues predominate over residues 758–780 (KDNDDAPKVKKAKKEEVPEEKVP).

It belongs to the JHDM1 histone demethylase family. JHDM1D subfamily. Requires Fe(2+) as cofactor. Mainly expressed in neurons. Also weakly expressed in some muscle, intestinal and hypodermal cells.

The protein resides in the nucleus. Competitively inhibited by 2-hydroxyglutarate. In terms of biological role, histone demethylase required for nervous system development. Specifically demethylates dimethylated 'Lys-9', 'Lys-23' and 'Lys-27' (H3K9me2, H3K23me2 and H3K27me2, respectively) of histone H3, thereby playing a central role in histone code. Promotes mitochondrial stress-induced longevity. This is Lysine-specific demethylase 7 homolog (jmjd-1.2) from Caenorhabditis elegans.